The sequence spans 242 residues: MEGWQRAFVLHSRPWSETSLMLDVFTEESGRVRLVAKGARSKRSNLKGALQPFTPLLLRYSGRGEVKTLRSAEAVSLALPLSGITLYSGLYINELLSRVLEYETRFSELFFDYLNCIQALAGTTGSPEPALRRFELALLGHLGYGVNFTHCAGSGERVDDTMTYRYREEKGFFASVVIDNNTFTGRHLKALEAREFPDVDTLRAAKRFTRMALKPYLGGKPLKSRELFRQFMPKRTVKTKKD.

It belongs to the RecO family. Monomer.

Its function is as follows. Involved in DNA repair and RecF pathway recombination. The protein is DNA repair protein RecO of Salmonella agona (strain SL483).